A 79-amino-acid polypeptide reads, in one-letter code: RNA-binding protein KhpA (79 aa).

The region spanning 32–79 (FLEYHLNLDQSDVGRVIGRKGRTISAIRTIVYSVPTEYKKVRIVIDEK) is the KH domain.

Belongs to the KhpA RNA-binding protein family. Forms a complex with KhpB. KhpA and KhpB colocalize throughout the cell cycle, with some increase at midcell in dividing cells.

It localises to the cytoplasm. Its function is as follows. A probable RNA chaperone. Forms a complex with KhpB which presumably binds to about 170 cellular RNAs (mRNA, tRNA intergenic RNA and sRNAs); the proteins alone each bind the same set of RNAs. A mutation in this gene suppresses the requirement for PBP2b (penA, a transpeptidase) in peripheral peptidoglycan (PG) synthesis. Probably plays a role in PG homeostasis and regulating peripheral PG synthesis. The chain is RNA-binding protein KhpA from Streptococcus pneumoniae serotype 2 (strain D39 / NCTC 7466).